The primary structure comprises 306 residues: MTTAGYYAAVDWGTSSFRLWIIGEDGAVLAERRSAEGMTTAAKTGFHTILDGHLAAVSAPAHLPIIICGMAGARQGWKEAGYIETPAALAEIAGRATAIPDVDRDIRILPGLAQRDRRHPDVMRGEETQLLGAAAHLGAGSHLVCMPGTHSKWVRLADDRVEGFSTFMTGELFDTIARHTILSHAVAEADTFAAGSAAFTDAVSRTRENPALATNLLFSVRAGQLLHGTAAADARAQLSGTLIGLEIAGALAGSGSVDGVCLVGSGGLGTLYRTALESQGLNVRAVDADEAVRAGLSAAARAIWPL.

This sequence belongs to the DgoK family.

It carries out the reaction 2-dehydro-3-deoxy-D-galactonate + ATP = 2-dehydro-3-deoxy-6-phospho-D-galactonate + ADP + H(+). The protein operates within carbohydrate acid metabolism; D-galactonate degradation; D-glyceraldehyde 3-phosphate and pyruvate from D-galactonate: step 2/3. Functionally, involved in the degradation of galactose via the DeLey-Doudoroff pathway. The sequence is that of Probable 2-dehydro-3-deoxygalactonokinase DgoK1 (dgoK1) from Rhizobium meliloti (strain 1021) (Ensifer meliloti).